A 447-amino-acid polypeptide reads, in one-letter code: UPF0210 protein OEOE_0945 (447 aa).

The protein belongs to the UPF0210 family. In terms of assembly, homodimer.

The protein is UPF0210 protein OEOE_0945 of Oenococcus oeni (strain ATCC BAA-331 / PSU-1).